The primary structure comprises 266 residues: MVAKNVKTFALGVEYDGSYYHGWQRQKILPSIQEEIEKALSIIANHKIDVVCAGRTDAGVHSIGQVIHFKTTANRKKSSWSIGVNSYLSENISVVWVKEVTENFHARYSAITRSYRYIIYNYSLRSAIFQTKLNHIYRKLNVDKMNFEAQFLLGEHDFTSFRALGCQSHSPWRNITKLNVFRFHNWVVVDITANSFLHHMVRNIVGSLIEVGISKKKEYWIKDLLEKKDRSHAGATAPAKGLYLVYVEYPLHFNLPRSAYTSIFFK.

The Nucleophile role is filled by aspartate 57. Tyrosine 115 contributes to the substrate binding site.

This sequence belongs to the tRNA pseudouridine synthase TruA family. In terms of assembly, homodimer.

It catalyses the reaction uridine(38/39/40) in tRNA = pseudouridine(38/39/40) in tRNA. Functionally, formation of pseudouridine at positions 38, 39 and 40 in the anticodon stem and loop of transfer RNAs. This Buchnera aphidicola subsp. Acyrthosiphon pisum (strain APS) (Acyrthosiphon pisum symbiotic bacterium) protein is tRNA pseudouridine synthase A.